The sequence spans 214 residues: Small ribosomal subunit protein uS5 (214 aa).

The S5 DRBM domain maps to 54 to 117 (LKYEVVDIKV…RDAKMNIIPV (64 aa)).

It belongs to the universal ribosomal protein uS5 family. As to quaternary structure, part of the 30S ribosomal subunit. Contacts protein S4.

In terms of biological role, with S4 and S12 plays an important role in translational accuracy. The protein is Small ribosomal subunit protein uS5 of Saccharolobus solfataricus (strain ATCC 35092 / DSM 1617 / JCM 11322 / P2) (Sulfolobus solfataricus).